The primary structure comprises 367 residues: NADH-ubiquinone oxidoreductase chain 1 (367 aa).

The next 10 membrane-spanning stretches (helical) occupy residues 5–25 (IIIS…GIAY), 43–63 (PNFV…KLLL), 74–94 (IILF…GYAV), 108–128 (LGIY…LLAG), 152–172 (LVLS…NLSV), 179–199 (AIWN…GSVA), 225–245 (AVVF…MCIL), 265–285 (FFYS…NIFY), 301–321 (LIYG…FIWV), and 336–356 (FCWT…PCIL).

Belongs to the complex I subunit 1 family.

It is found in the mitochondrion inner membrane. The catalysed reaction is a ubiquinone + NADH + 5 H(+)(in) = a ubiquinol + NAD(+) + 4 H(+)(out). Core subunit of the mitochondrial membrane respiratory chain NADH dehydrogenase (Complex I) that is believed to belong to the minimal assembly required for catalysis. Complex I functions in the transfer of electrons from NADH to the respiratory chain. The immediate electron acceptor for the enzyme is believed to be ubiquinone. The polypeptide is NADH-ubiquinone oxidoreductase chain 1 (ND1) (Podospora anserina (strain S / ATCC MYA-4624 / DSM 980 / FGSC 10383) (Pleurage anserina)).